A 971-amino-acid chain; its full sequence is Translation initiation factor IF-2 (971 aa).

A compositionally biased stretch (basic and acidic residues) spans 49-63 (HLRKSHGATDGDKRK). Disordered stretches follow at residues 49-85 (HLRKSHGATDGDKRKITLTRKHTSEIKQSDATGKART) and 99-386 (RDDV…PTEP). Residues 105–114 (GAEQGQAQVA) show a composition bias toward low complexity. The span at 121-181 (ELKRREEEAR…EEEAAAKRAA (61 aa)) shows a compositional bias: basic and acidic residues. Low complexity predominate over residues 182–200 (AEAAAAQQAAAQQAAAEQE). Residues 209–260 (DEARAAAERAAQREAAKKAEDAAREAADKARAEQEEISKRRAAAEAEARAIR) show a composition bias toward basic and acidic residues. The span at 303 to 325 (ARPAVKKPAGAAAPATTQAPAGA) shows a compositional bias: low complexity. Over residues 355 to 368 (SSGGVDRGWRGGPK) the composition is skewed to gly residues. One can recognise a tr-type G domain in the interval 471-640 (PRPPVVTVMG…LLQAEVLELK (170 aa)). Positions 480 to 487 (GHVDHGKT) are G1. Residue 480 to 487 (GHVDHGKT) coordinates GTP. The G2 stretch occupies residues 505–509 (GITQH). Positions 526–529 (DTPG) are G3. GTP is bound by residues 526–530 (DTPGH) and 580–583 (NKID). The tract at residues 580–583 (NKID) is G4. Residues 616–618 (SAK) are G5.

The protein belongs to the TRAFAC class translation factor GTPase superfamily. Classic translation factor GTPase family. IF-2 subfamily.

The protein resides in the cytoplasm. One of the essential components for the initiation of protein synthesis. Protects formylmethionyl-tRNA from spontaneous hydrolysis and promotes its binding to the 30S ribosomal subunits. Also involved in the hydrolysis of GTP during the formation of the 70S ribosomal complex. The protein is Translation initiation factor IF-2 of Burkholderia cenocepacia (strain ATCC BAA-245 / DSM 16553 / LMG 16656 / NCTC 13227 / J2315 / CF5610) (Burkholderia cepacia (strain J2315)).